A 502-amino-acid polypeptide reads, in one-letter code: Probable glycine dehydrogenase (decarboxylating) subunit 2 (502 aa).

The residue at position 273 (K273) is an N6-(pyridoxal phosphate)lysine.

This sequence belongs to the GcvP family. C-terminal subunit subfamily. The glycine cleavage system is composed of four proteins: P, T, L and H. In this organism, the P 'protein' is a heterodimer of two subunits. Pyridoxal 5'-phosphate serves as cofactor.

It catalyses the reaction N(6)-[(R)-lipoyl]-L-lysyl-[glycine-cleavage complex H protein] + glycine + H(+) = N(6)-[(R)-S(8)-aminomethyldihydrolipoyl]-L-lysyl-[glycine-cleavage complex H protein] + CO2. In terms of biological role, the glycine cleavage system catalyzes the degradation of glycine. The P protein binds the alpha-amino group of glycine through its pyridoxal phosphate cofactor; CO(2) is released and the remaining methylamine moiety is then transferred to the lipoamide cofactor of the H protein. This Thermococcus gammatolerans (strain DSM 15229 / JCM 11827 / EJ3) protein is Probable glycine dehydrogenase (decarboxylating) subunit 2.